Consider the following 243-residue polypeptide: High affinity immunoglobulin epsilon receptor subunit beta (243 aa).

Residues 1 to 48 (MDTENKSRADLALPNPQESPSAPDIELLEASPPAKALPEKPASPPPQQ) form a disordered region. Residues 1–59 (MDTENKSRADLALPNPQESPSAPDIELLEASPPAKALPEKPASPPPQQTWQSFLKKELE) lie on the Cytoplasmic side of the membrane. The chain crosses the membrane as a helical span at residues 60–79 (FLGVTQVLVGLICLCFGTVV). Topologically, residues 80–97 (CSTLQTSDFDDEVLLLYR) are extracellular. A helical membrane pass occupies residues 98 to 117 (AGYPFWGAVLFVLSGFLSIM). The Cytoplasmic portion of the chain corresponds to 118 to 130 (SERKNTLYLVRGS). Residues 131–150 (LGANIVSSIAAGLGIAILIL) form a helical membrane-spanning segment. The Extracellular segment spans residues 151 to 179 (NLSNNSAYMNYCKDITEDDGCFVTSFITE). The helical transmembrane segment at 180–199 (LVLMLLFLTILAFCSAVLLI) threads the bilayer. Residues 200 to 243 (IYRIGQEFERSKVPDDRLYEELHVYSPIYSALEDTREASAPVVS) are Cytoplasmic-facing. A phosphotyrosine mark is found at Y218 and Y224. S225 carries the post-translational modification Phosphoserine. Y228 is modified (phosphotyrosine).

This sequence belongs to the MS4A family. In terms of assembly, tetramer of an alpha chain, a beta chain, and two disulfide linked gamma chains. Binds LILRB1. Interacts with FES/FPS and LYN. Interacts with FGR. Post-translationally, phosphorylated on tyrosine residues by LYN.

It localises to the membrane. Its function is as follows. High affinity receptor that binds to the Fc region of immunoglobulins epsilon. Aggregation of FCER1 by multivalent antigens is required for the full mast cell response, including the release of preformed mediators (such as histamine) by degranulation and de novo production of lipid mediators and cytokines. Also mediates the secretion of important lymphokines. Binding of allergen to receptor-bound IgE leads to cell activation and the release of mediators responsible for the manifestations of allergy. The polypeptide is High affinity immunoglobulin epsilon receptor subunit beta (Ms4a2) (Rattus norvegicus (Rat)).